Here is a 310-residue protein sequence, read N- to C-terminus: NAD kinase 1 (310 aa).

Residue Asp68 is the Proton acceptor of the active site. NAD(+) contacts are provided by residues 68 to 69, 145 to 146, Arg156, His175, and Asp177; these read DG and NE.

This sequence belongs to the NAD kinase family. Requires a divalent metal cation as cofactor.

It is found in the cytoplasm. It carries out the reaction NAD(+) + ATP = ADP + NADP(+) + H(+). Functionally, involved in the regulation of the intracellular balance of NAD and NADP, and is a key enzyme in the biosynthesis of NADP. Catalyzes specifically the phosphorylation on 2'-hydroxyl of the adenosine moiety of NAD to yield NADP. The protein is NAD kinase 1 of Gloeobacter violaceus (strain ATCC 29082 / PCC 7421).